The chain runs to 237 residues: Demethylmenaquinone methyltransferase (237 aa).

Residues Thr58, Asp79, and 106-107 contribute to the S-adenosyl-L-methionine site; that span reads NA.

The protein belongs to the class I-like SAM-binding methyltransferase superfamily. MenG/UbiE family.

It catalyses the reaction a 2-demethylmenaquinol + S-adenosyl-L-methionine = a menaquinol + S-adenosyl-L-homocysteine + H(+). It participates in quinol/quinone metabolism; menaquinone biosynthesis; menaquinol from 1,4-dihydroxy-2-naphthoate: step 2/2. Functionally, methyltransferase required for the conversion of demethylmenaquinol (DMKH2) to menaquinol (MKH2). The sequence is that of Demethylmenaquinone methyltransferase from Anoxybacillus flavithermus (strain DSM 21510 / WK1).